The chain runs to 563 residues: Cystathionine gamma-synthase 1, chloroplastic (563 aa).

Residues 1 to 68 constitute a chloroplast transit peptide; sequence MAVSSFQCPT…SRILRFPPNF (68 aa). Pyridoxal 5'-phosphate-binding residues include Tyr226, Arg228, Gly256, Met257, Tyr281, Ser376, and Thr378. Lys379 is subject to N6-(pyridoxal phosphate)lysine.

This sequence belongs to the trans-sulfuration enzymes family. The cofactor is pyridoxal 5'-phosphate.

The protein resides in the plastid. The protein localises to the chloroplast. The catalysed reaction is O-phospho-L-homoserine + L-cysteine = L,L-cystathionine + phosphate. It catalyses the reaction O-succinyl-L-homoserine + L-cysteine = L,L-cystathionine + succinate + H(+). Its pathway is amino-acid biosynthesis; L-methionine biosynthesis via de novo pathway; L-cystathionine from O-succinyl-L-homoserine: step 1/1. Its activity is regulated as follows. Inhibited by propargylglycine. Its function is as follows. Catalyzes the first committed step of methionine (Met) biosynthesis. Catalyzes the formation of L-cystathionine from homoserine esters and L-cysteine, via a gamma-replacement reaction. Substrate preference for cystathionine synthesis is O-phospho-L-homoserine (OPH) &gt; O(4)-succinyl-L-homoserine (OSH) &gt;&gt; O-acetyl-L-homoserine (OAH). Is able, at extremely low rate, to catalyze a gamma-elimination of OPH in the absence of cysteine to produce inorganic phosphate (Pi), 2-oxobutanoate and ammonia. The protein is Cystathionine gamma-synthase 1, chloroplastic of Arabidopsis thaliana (Mouse-ear cress).